A 355-amino-acid chain; its full sequence is D-alanine--D-alanine ligase (355 aa).

The ATP-grasp domain maps to 143–350; sequence KTIFSNLKIP…IEQLVAKLVD (208 aa). 178-233 contacts ATP; the sequence is IKKLNFPVFVKPSNSGSSLGISKVINKSALLKALEKAWEIDARILVEEGLETREIE. Mg(2+) contacts are provided by aspartate 303, glutamate 317, and asparagine 319.

Belongs to the D-alanine--D-alanine ligase family. Requires Mg(2+) as cofactor. The cofactor is Mn(2+).

Its subcellular location is the cytoplasm. It carries out the reaction 2 D-alanine + ATP = D-alanyl-D-alanine + ADP + phosphate + H(+). It functions in the pathway cell wall biogenesis; peptidoglycan biosynthesis. In terms of biological role, cell wall formation. The chain is D-alanine--D-alanine ligase from Prochlorococcus marinus (strain MIT 9312).